Here is a 383-residue protein sequence, read N- to C-terminus: UDP-D-xylose:L-fucose alpha-1,3-D-xylosyltransferase 3 (383 aa).

At 1–20 the chain is on the cytoplasmic side; the sequence is MAQQSQRPISNRHISLLNRN. Residues 21–41 traverse the membrane as a helical; Signal-anchor for type II membrane protein segment; it reads GLILLLLLALFVILGVFLPLT. Residues 42–383 lie on the Lumenal side of the membrane; the sequence is KSSLFMFPNT…KNRGKKHKLP (342 aa). Residues N50, N82, and N157 are each glycosylated (N-linked (GlcNAc...) asparagine). Positions 180–182 match the DXD motif motif; the sequence is DVD. 6 N-linked (GlcNAc...) asparagine glycosylation sites follow: N212, N258, N301, N306, N357, and N364.

This sequence belongs to the glycosyltransferase 77 family. Mn(2+) serves as cofactor. It depends on Mg(2+) as a cofactor. Glycosylated. Expressed around trichome support cells in the adaxial epidermis of rosette leaves, in cauline leaves, petals and both the proximal and distal ends of siliques.

The protein localises to the golgi apparatus membrane. Catalyzes the transfer of D-xylose from UDP-alpha-D-xylose onto L-fucose. Probably involved in the biosynthesis of rhamnogalacturonan II (RG-II) through xylosylation of the internal fucose moiety of the A-chain of RG-II, a structurally complex pectic polysaccharide of the primary cell wall. RG-II is essential for the cell wall integrity of rapidly growing tissues such as roots and pollen tube growth and elongation. The protein is UDP-D-xylose:L-fucose alpha-1,3-D-xylosyltransferase 3 of Arabidopsis thaliana (Mouse-ear cress).